A 90-amino-acid chain; its full sequence is Probable Fe(2+)-trafficking protein (90 aa).

Belongs to the Fe(2+)-trafficking protein family.

Could be a mediator in iron transactions between iron acquisition and iron-requiring processes, such as synthesis and/or repair of Fe-S clusters in biosynthetic enzymes. This Pseudoalteromonas atlantica (strain T6c / ATCC BAA-1087) protein is Probable Fe(2+)-trafficking protein.